A 658-amino-acid chain; its full sequence is Probable replication factor A 73 kDa subunit (658 aa).

Disordered stretches follow at residues 134–155 (PEVK…RPNI) and 169–222 (SEFQ…TERG). Residues 236–326 (FRIHGMVSRK…TLRNDSVVEA (91 aa)) constitute a DNA-binding region (OB). The segment at 518–539 (CASEGCQKKVIESDGEYRCEKC) adopts a C4-type zinc-finger fold.

It belongs to the replication factor A protein 1 family. In terms of assembly, component of the heterotrimeric canonical replication protein A complex (RPA).

It is found in the nucleus. In terms of biological role, as part of the heterotrimeric replication protein A complex (RPA/RP-A), binds and stabilizes single-stranded DNA intermediates, that form during DNA replication or upon DNA stress. It prevents their reannealing and in parallel, recruits and activates different proteins and complexes involved in DNA metabolism. Thereby, it plays an essential role both in DNA replication and the cellular response to DNA damage. In Caenorhabditis briggsae, this protein is Probable replication factor A 73 kDa subunit.